A 350-amino-acid polypeptide reads, in one-letter code: Inhibin beta E chain (350 aa).

Positions 1 to 19 (MRLPDVQLWLVLLWALVRA) are cleaved as a signal peptide. A propeptide spanning residues 20 to 236 (QGTGSVCPSC…EPGAGRARRR (217 aa)) is cleaved from the precursor. A glycan (N-linked (GlcNAc...) asparagine) is linked at N198. Cystine bridges form between C240–C248, C247–C315, C276–C347, and C280–C349.

The protein belongs to the TGF-beta family. In terms of assembly, homodimeric or heterodimeric through association with alpha and beta subunits, linked by one or more disulfide bonds. Inhibins are heterodimers of one alpha and one beta subunit. Activins are homo- or heterodimers of beta subunits only.

Its subcellular location is the secreted. Its function is as follows. Inhibins and activins inhibit and activate, respectively, the secretion of follitropin by the pituitary gland. Inhibins/activins are involved in regulating a number of diverse functions such as hypothalamic and pituitary hormone secretion, gonadal hormone secretion, germ cell development and maturation, erythroid differentiation, insulin secretion, nerve cell survival, embryonic axial development or bone growth, depending on their subunit composition. Inhibins appear to oppose the functions of activins. In terms of biological role, activin E is a homodimer of INHBE secreted by the liver that plays a crucial role in regulating metabolic homeostasis particularly in lipid metabolism and energy homeostasis. Plays a central role in the regulation of adipose tissue lipolysis by preventing the influx of fatty acids from adipose tissue into the liver. Mechanistically, signals via ACVR1C to activate SMAD2/3 signaling, suppressing PPARG target genes in adipose tissue, thereby reducing liver lipid content and improving glycemic control. Induces beige adipocyte formation and thermogenesis in response to cold exposure. The protein is Inhibin beta E chain (INHBE) of Homo sapiens (Human).